The primary structure comprises 357 residues: Protein Wnt-9b (357 aa).

The N-terminal stretch at 1 to 22 (MRPPPALALAGLCLLALPAAAA) is a signal peptide. Intrachain disulfides connect cysteine 89–cysteine 100, cysteine 135–cysteine 143, cysteine 145–cysteine 162, cysteine 210–cysteine 224, cysteine 212–cysteine 219, cysteine 291–cysteine 316, cysteine 305–cysteine 311, cysteine 315–cysteine 355, cysteine 331–cysteine 346, cysteine 333–cysteine 343, and cysteine 338–cysteine 339. Asparagine 99 carries N-linked (GlcNAc...) asparagine glycosylation. Serine 216 carries O-palmitoleoyl serine; by PORCN lipidation.

Belongs to the Wnt family. Forms a soluble 1:1 complex with AFM; this prevents oligomerization and is required for prolonged biological activity. The complex with AFM may represent the physiological form in body fluids. Component of the Wnt-Fzd-LRP5-LRP6 signaling complex that contains a WNT protein, a FZD protein and LRP5 or LRP6. Interacts directly in the complex with LRP6. Interacts with PKD1 (via extracellular domain). Post-translationally, palmitoleoylation is required for efficient binding to frizzled receptors. Depalmitoleoylation leads to Wnt signaling pathway inhibition. As to expression, moderately expressed in fetal kidney and adult kidney. Also found in brain.

The protein resides in the secreted. The protein localises to the extracellular space. It is found in the extracellular matrix. Ligand for members of the frizzled family of seven transmembrane receptors. Functions in the canonical Wnt/beta-catenin signaling pathway. Required for normal embryonic kidney development, and for normal development of the urogenital tract, including uterus and part of the oviduct and the upper vagina in females, and epididymis and vas deferens in males. Activates a signaling cascade in the metanephric mesenchyme that induces tubulogenesis. Acts upstream of WNT4 in the signaling pathways that mediate development of kidney tubules and the Muellerian ducts. Plays a role in cranofacial development and is required for normal fusion of the palate during embryonic development. This chain is Protein Wnt-9b (WNT9B), found in Homo sapiens (Human).